The sequence spans 253 residues: Small ribosomal subunit protein eS6 (253 aa).

Residues 200-253 (KKRLAKRKQSENDYAKLLAQRKKESKVRRQEELKRRRSASMRDSKSSDKSAPQK) form a disordered region. Residues 226 to 247 (VRRQEELKRRRSASMRDSKSSD) show a composition bias toward basic and acidic residues.

The protein belongs to the eukaryotic ribosomal protein eS6 family. Component of the small ribosomal subunit. Part of the small subunit (SSU) processome, composed of more than 70 proteins and the RNA chaperone small nucleolar RNA (snoRNA) U3. In terms of processing, ribosomal protein S6 is the major substrate of protein kinases in eukaryote ribosomes.

Its subcellular location is the cytoplasm. The protein localises to the nucleus. It localises to the nucleolus. Functionally, component of the 40S small ribosomal subunit. Plays an important role in controlling cell growth and proliferation through the selective translation of particular classes of mRNA. Part of the small subunit (SSU) processome, first precursor of the small eukaryotic ribosomal subunit. During the assembly of the SSU processome in the nucleolus, many ribosome biogenesis factors, an RNA chaperone and ribosomal proteins associate with the nascent pre-rRNA and work in concert to generate RNA folding, modifications, rearrangements and cleavage as well as targeted degradation of pre-ribosomal RNA by the RNA exosome. This Spodoptera frugiperda (Fall armyworm) protein is Small ribosomal subunit protein eS6 (RpS6).